The following is a 516-amino-acid chain: Flavonoid-6-hydroxylase (516 aa).

A helical membrane pass occupies residues 3–23 (FNAAVCAALAFISLLSYYLIW). Position 455 (C455) interacts with heme.

This sequence belongs to the cytochrome P450 family. Heme is required as a cofactor.

It localises to the membrane. It catalyses the reaction genkwanin + reduced [NADPH--hemoprotein reductase] + O2 = scutellarein 7-methyl ether + oxidized [NADPH--hemoprotein reductase] + H2O. It carries out the reaction (2S)-sakuranetin + reduced [NADPH--hemoprotein reductase] + O2 = (2S)-7-methylcarthamidin + oxidized [NADPH--hemoprotein reductase] + H2O + H(+). The catalysed reaction is apigenin 4',7-dimethyl ether + reduced [NADPH--hemoprotein reductase] + O2 = ladanein + oxidized [NADPH--hemoprotein reductase] + H2O + H(+). The enzyme catalyses (2S)-naringenin 4',7-dimethyl ether + reduced [NADPH--hemoprotein reductase] + O2 = (2S)-carthamidin-4',7-dimethyl ether + oxidized [NADPH--hemoprotein reductase] + H2O + H(+). It functions in the pathway flavonoid metabolism. Functionally, 6-OH hydroxylase involved in the biosynthesis of polymethoxylated flavonoids natural products such as pebrellin, aroma compounds which contribute to the flavor of peppermint, and exhibit pharmacological activities such as anti-allergic, anti-oxidant, antibacterial, anti-proliferative, and anti-inflammatory effects. Catalyzes the 6-hydroxylation of 7-O-methylated precursors such as the conversion of genkwanin (GENK) to scutellarein-7-methyl ether (SCU7Me). Can also use apigenin-7,4'-dimethyl ether (AdM), naringenin-7-methyl ether (SAK) and naringenin-7,4'-dimethyl ether (NdM) as substrates. This Mentha piperita (Peppermint) protein is Flavonoid-6-hydroxylase.